Reading from the N-terminus, the 407-residue chain is D-3-phosphoglycerate dehydrogenase (407 aa).

Residues 161–162 (HI), Asp181, 238–240 (ASR), and Asp264 each bind NAD(+). Arg240 is an active-site residue. Glu269 is a catalytic residue. His292 functions as the Proton donor in the catalytic mechanism. Residue 292–295 (HIGG) coordinates NAD(+). The region spanning 340 to 407 (RILNIHNNKP…PNSIKTRVLY (68 aa)) is the ACT domain.

This sequence belongs to the D-isomer specific 2-hydroxyacid dehydrogenase family.

The enzyme catalyses (2R)-3-phosphoglycerate + NAD(+) = 3-phosphooxypyruvate + NADH + H(+). It carries out the reaction (R)-2-hydroxyglutarate + NAD(+) = 2-oxoglutarate + NADH + H(+). It functions in the pathway amino-acid biosynthesis; L-serine biosynthesis; L-serine from 3-phospho-D-glycerate: step 1/3. In terms of biological role, catalyzes the reversible oxidation of 3-phospho-D-glycerate to 3-phosphonooxypyruvate, the first step of the phosphorylated L-serine biosynthesis pathway. Also catalyzes the reversible oxidation of 2-hydroxyglutarate to 2-oxoglutarate. In Dictyostelium discoideum (Social amoeba), this protein is D-3-phosphoglycerate dehydrogenase (serA).